We begin with the raw amino-acid sequence, 210 residues long: UPF0637 protein RBAM_014510 (210 aa).

The protein belongs to the UPF0637 family.

The sequence is that of UPF0637 protein RBAM_014510 from Bacillus velezensis (strain DSM 23117 / BGSC 10A6 / LMG 26770 / FZB42) (Bacillus amyloliquefaciens subsp. plantarum).